We begin with the raw amino-acid sequence, 100 residues long: Small ribosomal subunit protein uS14 (100 aa).

Belongs to the universal ribosomal protein uS14 family. In terms of assembly, part of the 30S ribosomal subunit. Contacts proteins S3 and S10.

Its function is as follows. Binds 16S rRNA, required for the assembly of 30S particles and may also be responsible for determining the conformation of the 16S rRNA at the A site. The sequence is that of Small ribosomal subunit protein uS14 from Trichodesmium erythraeum (strain IMS101).